Consider the following 95-residue polypeptide: Small ribosomal subunit protein mS37 (95 aa).

The 43-residue stretch at 27–69 folds into the CHCH domain; it reads ANRCLVLMSNLLQCWSSNGHMNPVCEKLATDLKACTSQNVMGS. 2 consecutive short sequence motifs (cx9C motif) follow at residues 30–40 and 51–61; these read CLVLMSNLLQC and CEKLATDLKAC. 2 disulfide bridges follow: Cys30/Cys61 and Cys40/Cys51.

It belongs to the mitochondrion-specific ribosomal protein mS37 family. In terms of assembly, component of the mitochondrial small ribosomal subunit.

The protein localises to the mitochondrion. Its function is as follows. Involved in mitochondrial genome encoded proteins translation. This Eremothecium gossypii (strain ATCC 10895 / CBS 109.51 / FGSC 9923 / NRRL Y-1056) (Yeast) protein is Small ribosomal subunit protein mS37 (MRP10).